The primary structure comprises 662 residues: 72 kDa type IV collagenase (662 aa).

The signal sequence occupies residues 1–29; sequence MEARLVWGVLVGPLRVLCVLCCLLGHAIA. A propeptide spans 30-109 (activation peptide); sequence APSPIIKFPG…PRCGNPDVAN (80 aa). Positions 100 to 107 match the Cysteine switch motif; the sequence is PRCGNPDV. Position 102 (cysteine 102) interacts with Zn(2+). Positions 110-221 are collagenase-like 1; the sequence is YNFFPRKPKW…LWTLGEGQVV (112 aa). Ca(2+)-binding residues include aspartate 134 and aspartate 168. Zn(2+) contacts are provided by histidine 178 and aspartate 180. Residues aspartate 185 and glycine 186 each contribute to the Ca(2+) site. Histidine 193 is a Zn(2+) binding site. The Ca(2+) site is built by glycine 200, glycine 202, and aspartate 204. Histidine 206 provides a ligand contact to Zn(2+). Ca(2+) contacts are provided by aspartate 208, aspartate 209, and glutamate 211. A collagen-binding region spans residues 222-396; it reads RVKYGNADGE…WGFCPDQGYS (175 aa). Fibronectin type-II domains are found at residues 228–276, 286–334, and 344–392; these read ADGE…FCPH, GDGQ…FCPE, and SEGA…FCPD. Disulfide bonds link cysteine 233–cysteine 259, cysteine 247–cysteine 274, cysteine 291–cysteine 317, cysteine 305–cysteine 332, cysteine 349–cysteine 375, and cysteine 363–cysteine 390. Positions 397–467 are collagenase-like 2; the sequence is LFLVAAHEFG…GPTPTLGPVT (71 aa). A Zn(2+)-binding site is contributed by histidine 403. Glutamate 404 is a catalytic residue. The Zn(2+) site is built by histidine 407 and histidine 413. The segment at 414–662 is required for inhibitor TIMP2 binding; that stretch reads SQDPGALMAP…GSIKSDWLGC (249 aa). Residues cysteine 471 and cysteine 662 are joined by a disulfide bond. Hemopexin repeat units lie at residues 474–518, 519–565, 567–615, and 616–662; these read DIVF…WPEL, PEKI…GLPP, VQQV…WNAI, and PDNL…WLGC. Aspartate 478, aspartate 523, and aspartate 571 together coordinate Ca(2+). N-linked (GlcNAc...) asparagine glycosylation is present at asparagine 575. Position 620 (aspartate 620) interacts with Ca(2+). N-linked (GlcNAc...) asparagine glycosylation occurs at asparagine 644.

Belongs to the peptidase M10A family. Interacts (via the C-terminal hemopexin-like domains-containing region) with the integrin alpha-V/beta-3; the interaction promotes vascular invasion in angiogenic vessels and melamoma cells. Interacts (via the C-terminal PEX domain) with TIMP2 (via the C-terminal); the interaction inhibits the degradation activity. Interacts with GSK3B. It depends on Ca(2+) as a cofactor. Zn(2+) is required as a cofactor. Post-translationally, phosphorylation on multiple sites modulates enzymatic activity. Phosphorylated by PKC in vitro. In terms of processing, the propeptide is processed by MMP14 (MT-MMP1) and MMP16 (MT-MMP3). Autocatalytic cleavage in the C-terminal produces the anti-angiogenic peptide, PEX. This processing appears to be facilitated by binding integrin integrinv/beta3.

Its subcellular location is the secreted. The protein localises to the extracellular space. The protein resides in the extracellular matrix. It localises to the membrane. It is found in the nucleus. The catalysed reaction is Cleavage of gelatin type I and collagen types IV, V, VII, X. Cleaves the collagen-like sequence Pro-Gln-Gly-|-Ile-Ala-Gly-Gln.. In terms of biological role, ubiquitinous metalloproteinase that is involved in diverse functions such as remodeling of the vasculature, angiogenesis, tissue repair, tumor invasion, inflammation, and atherosclerotic plaque rupture. As well as degrading extracellular matrix proteins, can also act on several nonmatrix proteins such as big endothelial 1 and beta-type CGRP promoting vasoconstriction. Also cleaves KISS at a Gly-|-Leu bond. Appears to have a role in myocardial cell death pathways. Contributes to myocardial oxidative stress by regulating the activity of GSK3beta. Cleaves GSK3beta in vitro. Involved in the formation of the fibrovascular tissues. PEX, the C-terminal non-catalytic fragment of MMP2, possesses anti-angiogenic and anti-tumor properties and inhibits cell migration and cell adhesion to FGF2 and vitronectin. Ligand for integrin alpha-v/beta3 on the surface of blood vessels. The chain is 72 kDa type IV collagenase (Mmp2) from Rattus norvegicus (Rat).